The sequence spans 416 residues: Cyclin-L1-1 (416 aa).

A disordered region spans residues 286-416 (KCTAGSANND…DSSKDRRRHH (131 aa)). Basic and acidic residues-rich tracts occupy residues 304-315 (PHEKATDSKKSG), 328-374 (SYER…DKLK), 384-393 (RLKDSGGHSD), and 401-410 (RDRDYRDSSK).

This sequence belongs to the cyclin family. Cyclin L subfamily. As to quaternary structure, forms a complex with CDKG1. Interacts with MOS4 and associates with the spliceosome.

It localises to the nucleus. Its function is as follows. Cognate cyclin for CDKG1. Required for synapsis and male meiosis, and for the proper splicing of specific resistance (R) genes. Involved in regulation of DNA methylation and transcriptional silencing. In Arabidopsis thaliana (Mouse-ear cress), this protein is Cyclin-L1-1 (CYCL1-1).